We begin with the raw amino-acid sequence, 193 residues long: ATP-dependent Clp protease proteolytic subunit (193 aa).

Ser-98 (nucleophile) is an active-site residue. His-123 is a catalytic residue.

Belongs to the peptidase S14 family. Fourteen ClpP subunits assemble into 2 heptameric rings which stack back to back to give a disk-like structure with a central cavity, resembling the structure of eukaryotic proteasomes.

It localises to the cytoplasm. The catalysed reaction is Hydrolysis of proteins to small peptides in the presence of ATP and magnesium. alpha-casein is the usual test substrate. In the absence of ATP, only oligopeptides shorter than five residues are hydrolyzed (such as succinyl-Leu-Tyr-|-NHMec, and Leu-Tyr-Leu-|-Tyr-Trp, in which cleavage of the -Tyr-|-Leu- and -Tyr-|-Trp bonds also occurs).. In terms of biological role, cleaves peptides in various proteins in a process that requires ATP hydrolysis. Has a chymotrypsin-like activity. Plays a major role in the degradation of misfolded proteins. The chain is ATP-dependent Clp protease proteolytic subunit from Mannheimia succiniciproducens (strain KCTC 0769BP / MBEL55E).